Reading from the N-terminus, the 734-residue chain is Photosystem I P700 chlorophyll a apoprotein A2 (734 aa).

8 helical membrane passes run 46–69 (IFAS…FHVA), 135–158 (LYTG…LHLQ), 175–199 (LNHH…HVAI), 273–291 (MAHH…GHMY), 330–353 (LHMQ…QHMY), 369–395 (ASLY…IFFV), 417–439 (AIIS…LYVH), and 517–535 (FLVH…LILV). Positions 559 and 568 each coordinate [4Fe-4S] cluster. The next 2 membrane-spanning stretches (helical) occupy residues 575 to 596 (AFYL…YWHW) and 643 to 665 (LSVW…MFLI). Chlorophyll a contacts are provided by His-654, Met-662, and Tyr-670. Position 671 (Trp-671) interacts with phylloquinone. Residues 707 to 727 (LVGLAHFSVGYVLTYAAFVLA) traverse the membrane as a helical segment.

This sequence belongs to the PsaA/PsaB family. The PsaA/B heterodimer binds the P700 chlorophyll special pair and subsequent electron acceptors. PSI consists of a core antenna complex that captures photons, and an electron transfer chain that converts photonic excitation into a charge separation. The eukaryotic PSI reaction center is composed of at least 11 subunits. Requires P700 is a chlorophyll a/chlorophyll a' dimer, A0 is one or more chlorophyll a, A1 is one or both phylloquinones and FX is a shared 4Fe-4S iron-sulfur center. as cofactor.

It localises to the plastid. It is found in the chloroplast thylakoid membrane. It carries out the reaction reduced [plastocyanin] + hnu + oxidized [2Fe-2S]-[ferredoxin] = oxidized [plastocyanin] + reduced [2Fe-2S]-[ferredoxin]. Its function is as follows. PsaA and PsaB bind P700, the primary electron donor of photosystem I (PSI), as well as the electron acceptors A0, A1 and FX. PSI is a plastocyanin/cytochrome c6-ferredoxin oxidoreductase, converting photonic excitation into a charge separation, which transfers an electron from the donor P700 chlorophyll pair to the spectroscopically characterized acceptors A0, A1, FX, FA and FB in turn. Oxidized P700 is reduced on the lumenal side of the thylakoid membrane by plastocyanin or cytochrome c6. The sequence is that of Photosystem I P700 chlorophyll a apoprotein A2 from Porphyra purpurea (Red seaweed).